Here is a 362-residue protein sequence, read N- to C-terminus: Zinc phosphodiesterase ELAC protein 1 (362 aa).

Positions 62, 64, 66, 67, 181, 252, and 312 each coordinate Zn(2+). Asp66 acts as the Proton acceptor in catalysis.

This sequence belongs to the RNase Z family. As to quaternary structure, homodimer. Zn(2+) is required as a cofactor.

The protein resides in the cytoplasm. The protein localises to the cytosol. It localises to the nucleus. It carries out the reaction Endonucleolytic cleavage of RNA, removing extra 3' nucleotides from tRNA precursor, generating 3' termini of tRNAs. A 3'-hydroxy group is left at the tRNA terminus and a 5'-phosphoryl group is left at the trailer molecule.. In terms of biological role, zinc phosphodiesterase, which displays some tRNA 3'-processing endonuclease activity. Specifically involved in tRNA repair: acts downstream of the ribosome-associated quality control (RQC) pathway by removing a 2',3'-cyclic phosphate from tRNAs following cleavage by ANKZF1. tRNAs are then processed by TRNT1. This Mus musculus (Mouse) protein is Zinc phosphodiesterase ELAC protein 1 (Elac1).